Reading from the N-terminus, the 278-residue chain is Urease accessory protein UreD 1 (278 aa).

The protein belongs to the UreD family. As to quaternary structure, ureD, UreF and UreG form a complex that acts as a GTP-hydrolysis-dependent molecular chaperone, activating the urease apoprotein by helping to assemble the nickel containing metallocenter of UreC. The UreE protein probably delivers the nickel.

It is found in the cytoplasm. Required for maturation of urease via the functional incorporation of the urease nickel metallocenter. The protein is Urease accessory protein UreD 1 of Bradyrhizobium sp. (strain ORS 278).